We begin with the raw amino-acid sequence, 1892 residues long: MRSLWLLVFSFSVLTGTNMAFPMILSERPEVTGSFKVKDTSLTHLTVHRKTGEVFVGAINRVYKLSANLTETRSHQTGPVEDNAKCYPPPSVRACTQKLESTDNVNKLLLVDYAGNRLVACGSIWQGVCQFLRLEDLFKLGEPHHRKEHYLSGAKESDGMAGVVVGDDDGDLKKKKKGGSRLFIGAAIDGKSEYFPTLSSRKLVADEESVNMFSLVYQDEFVSSQIKIPSDTLSQYPAFDIYYVYGFSSRTYIYFLTLQLDTQLTQVDVTGEKFFTSKIVRMCSNDTEFYSYVEFPLGCTKDGVEYRLVQAAYKHRPGKILAQALGLSEDEDVLFVIFSQGQKNRANPPRETVLCLFTLHQINLAMRERIKSCYRGEGKLSLPWLLNKELPCINTPKQIGDDFCGLVLNQPLGGLMVIEGIPLFDDRTDGMASVAAYTYGDHSVVFVGTRSGHLKKIRVNGVPPPSENALLYETVTVVEGSPILRDMVFSPDYQYIYLLSDKQVSRLPVESCSQYSSCKTCLGSGDPHCGWCVLHNKCSRKEACEKWAEPLHFSTELKQCVDITVTPDNMSVTSVSTQLSVKVANVPNLSAGVTCVFEELTESPGEVLAEGQILCMSPSLRDVPSVTQGYGDKRVVKLSLKSKETGLKFITTDFVFYNCSVLQSCSSCVSSPFPCNWCKYRHICTNNVAECSFQEGRVSSAEGCPQILPSSDILVPAGIVRPITLRARNLPQPQSGQKNYECVFNIQGKVQRIPAVRFNSSCIQCQNTSYWYEGNEMGDLPVDFSIVWDGDFPIDKPSSMRALLYKCEAQRDSCGLCLKADSTFECGWCLADKKCLLKQHCPSAEHNWMHQGRRNIRCSHPRITKIRPLTGPKEGGTRVTIEGENLGLQVREITHVRVAGVRCNPAAAEYISAERIVCDMEESLMSSPPGGPVELCIGDCSAEYRTQSTQTYSFVMPSFSRVRPEKGPVSGGTRLTISGRHLDAGSAVTVFLAQEECLFVRRTVREIVCVTPPSASGSGPSSVKLFIDKAEITSDTRYIYTEDPNISTIEPNWSIINGSTSLTVTGTNLLTIQEPKVRAKYGGVETTNICSLVNDSVMTCLAPGIIYTKREAPESGVHPDEFGFILDHVSALLILNGTPFTYYPNPTFEPLGNAGILEVKPGSPIILKGKNLIPPAPGNIRLNYSVTIGETPCLLTVSESQLLCDSPDLTGEQRVMILVGGLEYSPGMLHIYSDSTLTLPAIIGIGAGGGVLLIAIIAVLIAYKRKTRDADRTLKRLQLQMDNLESRVALECKEAFAELQTDIQELTNDMDGVKIPFLEYRTYTMRVMFPGIEEHPVLKELDSPANVEKALRLFSQLLHNKMFLLTFIHTLEAQRSFSMRDRGNVASLLMAALQGRMEYATVVLKQLLADLIEKNLENRNHPKLLLRRTESVAEKMLTNWFTFLLHRFLKECAGEPLFMLYCAIKQQMEKGPIDAITGEARYSLSEDKLIRQQIDYKQLTLMCIPPEGEAGTEIPVKVLNCDTITQVKDKLLDAVYKGIPYSQRPQADDMDLEWRQGRLTRIILQDEDVTTKIESDWKRLNTLAHYQVTDGSLVALVQKQVSAYNIANSFTFTRSLSRYESLLRTSSSPDSLRSRAPMITPDQETGTKLWHLVKNHEHADQREGDRGSKMVSEIYLTRLLATKGTLQKFVDDLFETVFSTAHRGSALPLAIKYMFDFLDEQADKRQITDPDVRHTWKSNCLPLRFWVNVIKNPQFVFDIHKNSITDACLSVVAQTFMDSCSTSEHRLGKDSPSNKLLYAKDIPNYKSWVERYYRDISKMPSISDQDMDAYLVEQSRLHGNEFNTLSALSELYFYINKYKEEILTALDRDGYCRKHKLRHKLEQAINLMSGSS.

An N-terminal signal peptide occupies residues 1 to 20 (MRSLWLLVFSFSVLTGTNMA). The Sema domain maps to 21 to 509 (FPMILSERPE…SDKQVSRLPV (489 aa)). Over 21 to 1240 (FPMILSERPE…IYSDSTLTLP (1220 aa)) the chain is Extracellular. An N-linked (GlcNAc...) asparagine glycan is attached at N68. 9 disulfide bridges follow: C86-C95, C121-C129, C283-C404, C299-C355, C373-C392, C512-C529, C518-C560, C521-C538, and C532-C544. N-linked (GlcNAc...) asparagine glycosylation occurs at N569. A disulfide bridge connects residues C595 and C615. IPT/TIG domains lie at 861–955 (PRIT…YSFV), 957–1041 (PSFS…YIYT), 1044–1143 (PNIS…FTYY), and 1146–1232 (PTFE…LHIY). An N-linked (GlcNAc...) asparagine glycan is attached at N1183. The helical transmembrane segment at 1241–1261 (AIIGIGAGGGVLLIAIIAVLI) threads the bilayer. Residues 1262 to 1315 (AYKRKTRDADRTLKRLQLQMDNLESRVALECKEAFAELQTDIQELTNDMDGVKI) adopt a coiled-coil conformation. Over 1262-1892 (AYKRKTRDAD…QAINLMSGSS (631 aa)) the chain is Cytoplasmic.

This sequence belongs to the plexin family. As to expression, detected in primary motor neurons in the embryonic nervous system.

It localises to the cell membrane. Functionally, coreceptor for class 3 semaphorins. Necessary for signaling by class 3 semaphorins and subsequent remodeling of the cytoskeleton. Plays a role in axon guidance in the developing nervous system. Class 3 semaphorins bind to a complex composed of a neuropilin and a plexin. The plexin modulates the affinity of the complex for specific semaphorins, and its cytoplasmic domain is required for the activation of down-stream signaling events in the cytoplasm. The chain is Plexin A3 (plxna3) from Danio rerio (Zebrafish).